The sequence spans 72 residues: Alpha-elapitoxin-Ast2b (72 aa).

Disulfide bonds link C3/C20, C13/C41, C26/C30, C45/C56, and C57/C62. R72 is modified (arginine amide).

The protein belongs to the three-finger toxin family. Long-chain subfamily. Type II alpha-neurotoxin sub-subfamily. Expressed by the venom gland.

The protein resides in the secreted. Binds with high affinity to muscular (alpha-1/CHRNA1) and neuronal (alpha-7/CHRNA7) nicotinic acetylcholine receptor (nAChR) and inhibits acetylcholine from binding to the receptor, thereby impairing neuromuscular and neuronal transmission. The polypeptide is Alpha-elapitoxin-Ast2b (Hydrophis stokesii (Stokes's sea snake)).